The primary structure comprises 435 residues: Protein deadpan (435 aa).

The segment covering 18-27 has biased composition (low complexity); the sequence is GYSDSYGSNG. A disordered region spans residues 18–48; it reads GYSDSYGSNGRMSNPNGLSKAELRKTNKPIM. The bHLH domain maps to 40–97; it reads LRKTNKPIMEKRRRARINHCLNELKSLILEAMKKDPARHTKLEKADILEMTVKHLQSV. The 34-residue stretch at 116–149 folds into the Orange domain; sequence FKTGFVECAEEVNRYVSQMDGIDTGVRQRLSAHL. Disordered stretches follow at residues 305 to 334 and 349 to 416; these read QLPV…AASP and STPP…DEPS. A compositionally biased stretch (low complexity) spans 311–324; sequence STSPPLSPISSISS. Polar residues-rich tracts occupy residues 355-378 and 385-395; these read SAET…SSGC and LQQQQVSSTSG. Phosphoserine occurs at positions 407, 408, and 411. The WRPW motif motif lies at 432–435; it reads WRPW.

Homodimer. Heterodimer with E(spl)mgamma-HLH and E(spl). Transcription repression requires formation of a complex with the corepressor protein Groucho. Interacts (via bHLH motif) with sisA. Interacts with da.

It is found in the nucleus. Transcriptional repressor of genes that require a bHLH protein for their transcription. In the larval brain, required to maintain the self-renewal and identity of type II neuroblasts by regulating the expression of the transcriptional repressor erm together with other self-renewal transcriptional repressors such as klu and E(spl)mgamma-HLH. As part of its role in neuroblasts development, has been shown to be a direct target of the Notch signaling pathway, however might work also independently of N/Notch. In the developing larval and pupal brain, required for mushroom body differentiation. Involved in sex determination and SXL transcription repression when in complex with the corepressor protein Groucho. The protein is Protein deadpan (dpn) of Drosophila melanogaster (Fruit fly).